The chain runs to 196 residues: Glycerol-3-phosphate acyltransferase (196 aa).

The next 4 helical transmembrane spans lie at 4 to 24 (LTLLMILSAYLLGSISSAVVI), 80 to 100 (PFFLGLIAVAACLGHIFPLYF), 114 to 134 (AMFPVAWEMALLLIATWLLVF), and 155 to 175 (AYWIKPQYTVPVIMISLLILW).

The protein belongs to the PlsY family. In terms of assembly, probably interacts with PlsX.

The protein resides in the cell inner membrane. The enzyme catalyses an acyl phosphate + sn-glycerol 3-phosphate = a 1-acyl-sn-glycero-3-phosphate + phosphate. It participates in lipid metabolism; phospholipid metabolism. In terms of biological role, catalyzes the transfer of an acyl group from acyl-phosphate (acyl-PO(4)) to glycerol-3-phosphate (G3P) to form lysophosphatidic acid (LPA). This enzyme utilizes acyl-phosphate as fatty acyl donor, but not acyl-CoA or acyl-ACP. This Idiomarina loihiensis (strain ATCC BAA-735 / DSM 15497 / L2-TR) protein is Glycerol-3-phosphate acyltransferase.